Consider the following 1546-residue polypeptide: DNA-directed RNA polymerase subunit beta' (1546 aa).

Zn(2+) contacts are provided by Cys-57, Cys-59, Cys-72, and Cys-75. Mg(2+) is bound by residues Asp-756, Asp-758, and Asp-760. Zn(2+) contacts are provided by Cys-1130, Cys-1211, Cys-1218, and Cys-1221. The interval 1512–1546 (LEKYGEGSTSSDAVTGGQRYDDTRPGSSINPGYGD) is disordered. The segment covering 1536–1546 (PGSSINPGYGD) has biased composition (polar residues).

It belongs to the RNA polymerase beta' chain family. In terms of assembly, the RNAP catalytic core consists of 2 alpha, 1 beta, 1 beta' and 1 omega subunit. When a sigma factor is associated with the core the holoenzyme is formed, which can initiate transcription. The cofactor is Mg(2+). Requires Zn(2+) as cofactor.

The enzyme catalyses RNA(n) + a ribonucleoside 5'-triphosphate = RNA(n+1) + diphosphate. In terms of biological role, DNA-dependent RNA polymerase catalyzes the transcription of DNA into RNA using the four ribonucleoside triphosphates as substrates. This chain is DNA-directed RNA polymerase subunit beta', found in Deinococcus radiodurans (strain ATCC 13939 / DSM 20539 / JCM 16871 / CCUG 27074 / LMG 4051 / NBRC 15346 / NCIMB 9279 / VKM B-1422 / R1).